The following is a 409-amino-acid chain: Mitochondrial inner membrane protein oxa1-2 (409 aa).

The helical transmembrane segment at 76-96 (VVYTPSLPLSSSVLASFSFLP) threads the bilayer. Over 97–114 (HNILQNGLNTLHIWSGLP) the chain is Mitochondrial intermembrane. The chain crosses the membrane as a helical span at residues 115–135 (WWASIAACAVAMRIAVFPIML). Over 136-188 (KMMKTSAKLAIINPKVAEHMSVLSKAKAEGNSELMMQATTQIQNLYKVNNVNP) the chain is Mitochondrial matrix. A helical membrane pass occupies residues 189–209 (LNLLSAPVFQGILFISFFYAL). Over 210-235 (KTMAGVPVEGFTDGGFWWVNDLSQPD) the chain is Mitochondrial intermembrane. A helical transmembrane segment spans residues 236 to 256 (PLHIFPVANGLLMLLNIELGS). Residues 257–275 (ETGSNKVAMSPSMKKFFRF) lie on the Mitochondrial matrix side of the membrane. The chain crosses the membrane as a helical span at residues 276-296 (LCLASPLFTMNFPMAIFMYWF). The Mitochondrial intermembrane portion of the chain corresponds to 297 to 409 (PSNVFSVFQG…SVTKPTEKKD (113 aa)). The disordered stretch occupies residues 369 to 409 (TDTNNEQKPTNNSTITKATTLSDNSQNDKSSSVTKPTEKKD). A compositionally biased stretch (polar residues) spans 374 to 403 (EQKPTNNSTITKATTLSDNSQNDKSSSVTK).

Belongs to the OXA1/ALB3/YidC family.

It is found in the mitochondrion inner membrane. Its function is as follows. Required for the insertion of integral membrane proteins into the mitochondrial inner membrane. Essential for the activity and assembly of cytochrome c oxidase. It is essential for viability while oxa101 is not. When both are deleted the cell is non-viable, suggesting that oxa101 act as a back-up for oxa102. The sequence is that of Mitochondrial inner membrane protein oxa1-2 (oxa102) from Schizosaccharomyces pombe (strain 972 / ATCC 24843) (Fission yeast).